Here is a 228-residue protein sequence, read N- to C-terminus: Probable octanoyltransferase (228 aa).

The BPL/LPL catalytic domain occupies 27-198 (SGGDDAFILV…AFEEVFEAKV (172 aa)). Substrate is bound by residues 65-72 (RGGDATYH), 129-131 (SIG), and 142-144 (GVA). Cys160 serves as the catalytic Acyl-thioester intermediate.

This sequence belongs to the LipB family.

The protein resides in the cytoplasm. The enzyme catalyses octanoyl-[ACP] + L-lysyl-[protein] = N(6)-octanoyl-L-lysyl-[protein] + holo-[ACP] + H(+). The protein operates within protein modification; protein lipoylation via endogenous pathway; protein N(6)-(lipoyl)lysine from octanoyl-[acyl-carrier-protein]: step 1/2. Its function is as follows. Catalyzes the transfer of endogenously produced octanoic acid from octanoyl-acyl-carrier-protein onto the lipoyl domains of lipoate-dependent enzymes. Lipoyl-ACP can also act as a substrate although octanoyl-ACP is likely to be the physiological substrate. This is Probable octanoyltransferase from Pyrobaculum calidifontis (strain DSM 21063 / JCM 11548 / VA1).